Reading from the N-terminus, the 744-residue chain is Cell surface receptor daf-4 (744 aa).

The N-terminal stretch at 1 to 31 (MNQKGTVRLKALVLICLPLFLIATPVPVAVT) is a signal peptide. Residues 48-253 (WANTLVSKVA…IALLILAYVG (206 aa)) are Extracellular-facing. Residues asparagine 60, asparagine 134, and asparagine 165 are each glycosylated (N-linked (GlcNAc...) asparagine). The chain crosses the membrane as a helical span at residues 254 to 274 (WKFQQNKKEEIKKQQKIKFDM). The Cytoplasmic segment spans residues 275 to 744 (EKTDALEAGN…PSGTFGTFTT (470 aa)). The Protein kinase domain occupies 306 to 603 (ITDFQLISKG…FARVWNHIMS (298 aa)). Residues 312–320 (ISKGRFGKV) and lysine 338 each bind ATP. Catalysis depends on aspartate 440, which acts as the Proton acceptor. Disordered regions lie at residues 605–686 (PDSS…PEPE) and 724–744 (AGAD…TFTT). Over residues 620-639 (RGVDDVEQSEKPEGIEEMQH) the composition is skewed to basic and acidic residues. Over residues 731 to 744 (STPTPSGTFGTFTT) the composition is skewed to low complexity.

It belongs to the protein kinase superfamily. TKL Ser/Thr protein kinase family. TGFB receptor subfamily. In terms of assembly, may interact with daf-1 to regulate dauer larva development. Interacts with sma-10. In terms of tissue distribution, pharynx, intestine, hypodermis and body wall muscles in L1 through to adult stages. Also expressed in head neurons, ventral cord and tail neurons. Subset of head neurons show coexpression with daf-1 when dauer/nondauer decision is made.

It localises to the cell membrane. The enzyme catalyses L-threonyl-[receptor-protein] + ATP = O-phospho-L-threonyl-[receptor-protein] + ADP + H(+). The catalysed reaction is L-seryl-[receptor-protein] + ATP = O-phospho-L-seryl-[receptor-protein] + ADP + H(+). Functionally, involved in a TGF-beta pathway. May be a receptor for TGF-beta-like ligand daf-7. Controls the decision of whether or not larvae enter a developmentally arrested state, known as dauer, in response to environmental conditions. Regulates body size and male tail patterning. Involved in regulating entry into quiescence triggered by satiety. Involved in sensitivity to CO2 levels. The chain is Cell surface receptor daf-4 from Caenorhabditis elegans.